The chain runs to 383 residues: Mannan endo-1,4-beta-mannosidase A (383 aa).

The N-terminal stretch at 1–18 (MKFSQALLSLASLALAAA) is a signal peptide. N75 is a glycosylation site (N-linked (GlcNAc...) asparagine). Residue W97 coordinates substrate. An N-linked (GlcNAc...) asparagine glycan is attached at N199. Residues N210 and 211-213 (EPR) contribute to the substrate site. E211 (proton donor/acceptor) is an active-site residue. An intrachain disulfide couples C214 to C217. 2 residues coordinate substrate: Y279 and W283. C301 and C308 are joined by a disulfide. The active-site Nucleophile is the E312. The cysteines at positions 320 and 369 are disulfide-linked. The N-linked (GlcNAc...) asparagine glycan is linked to N332. A substrate-binding site is contributed by W342.

It belongs to the glycosyl hydrolase 5 (cellulase A) family. As to quaternary structure, monomer.

The protein localises to the secreted. It catalyses the reaction Random hydrolysis of (1-&gt;4)-beta-D-mannosidic linkages in mannans, galactomannans and glucomannans.. Its function is as follows. Endo-1,4-mannanase that catalyzes the random hydrolysis of (1-&gt;4)-beta-D-mannosidic linkages in mannans and heteromannans. It is a crucial enzyme for depolymerization of seed galactomannans and wood galactoglucomannans. Active against locust bean gum and gum guar. Also has transglycosylation activity. This is Mannan endo-1,4-beta-mannosidase A (manA) from Emericella nidulans (strain FGSC A4 / ATCC 38163 / CBS 112.46 / NRRL 194 / M139) (Aspergillus nidulans).